The chain runs to 607 residues: Pescadillo homolog (607 aa).

Positions 320-413 (KLKNLFKGLK…KLLPVNKYLI (94 aa)) constitute a BRCT domain. The disordered stretch occupies residues 486 to 607 (EALNSGALEE…KTQRKEILAK (122 aa)). The segment covering 495–511 (EAPEEEDDDEEAPEEDE) has biased composition (acidic residues). Residues 530 to 549 (IFKENPSEQKKLTKQEEALR) are compositionally biased toward basic and acidic residues. Residues 551–562 (RMVKSRHKKLYR) are compositionally biased toward basic residues. Basic and acidic residues predominate over residues 563-607 (KMLEKQKKQTKEANLLKEKRQQIDKKQRVEQTQKRKTQRKEILAK).

It belongs to the pescadillo family.

It localises to the nucleus. It is found in the nucleolus. The protein resides in the nucleoplasm. Its function is as follows. Required for maturation of ribosomal RNAs and formation of the large ribosomal subunit. This is Pescadillo homolog from Culex quinquefasciatus (Southern house mosquito).